The primary structure comprises 135 residues: ATP synthase epsilon chain (135 aa).

Belongs to the ATPase epsilon chain family. In terms of assembly, F-type ATPases have 2 components, CF(1) - the catalytic core - and CF(0) - the membrane proton channel. CF(1) has five subunits: alpha(3), beta(3), gamma(1), delta(1), epsilon(1). CF(0) has three main subunits: a, b and c.

It localises to the cell inner membrane. In terms of biological role, produces ATP from ADP in the presence of a proton gradient across the membrane. The polypeptide is ATP synthase epsilon chain (Rhizobium leguminosarum bv. trifolii (strain WSM2304)).